We begin with the raw amino-acid sequence, 97 residues long: Small ribosomal subunit protein bS21 (97 aa).

Positions 37-97 (EKPSVRKARE…APASSPTTTA (61 aa)) are disordered. Positions 76 to 97 (RAVAPRRPAAAPAPASSPTTTA) are enriched in low complexity.

The protein belongs to the bacterial ribosomal protein bS21 family.

The sequence is that of Small ribosomal subunit protein bS21 from Methylobacterium sp. (strain 4-46).